The sequence spans 97 residues: uncharacterized protein (97 aa).

Positions 2–95 (IRHLVLFKLN…EFATWVIADY (94 aa)) constitute a Stress-response A/B barrel domain.

This is an uncharacterized protein from Streptomyces coelicolor (strain ATCC BAA-471 / A3(2) / M145).